The chain runs to 232 residues: Ribonuclease 3 (232 aa).

In terms of domain architecture, RNase III spans 7–135; it reads IQAVESKLKF…ILGAVYLDGG (129 aa). E48 provides a ligand contact to Mg(2+). Residue D52 is part of the active site. Mg(2+) contacts are provided by N121 and E124. E124 is an active-site residue. In terms of domain architecture, DRBM spans 160–229; it reads NPKNRLQQFT…AKQALSTHDD (70 aa).

It belongs to the ribonuclease III family. In terms of assembly, homodimer. Requires Mg(2+) as cofactor.

The protein localises to the cytoplasm. The catalysed reaction is Endonucleolytic cleavage to 5'-phosphomonoester.. In terms of biological role, digests double-stranded RNA. Involved in the processing of primary rRNA transcript to yield the immediate precursors to the large and small rRNAs (23S and 16S). Processes some mRNAs, and tRNAs when they are encoded in the rRNA operon. Processes pre-crRNA and tracrRNA of type II CRISPR loci if present in the organism. This chain is Ribonuclease 3, found in Chlamydia muridarum (strain MoPn / Nigg).